We begin with the raw amino-acid sequence, 532 residues long: 2,3-bisphosphoglycerate-independent phosphoglycerate mutase (532 aa).

Mn(2+) is bound by residues D13 and S63. The Phosphoserine intermediate role is filled by S63. Substrate is bound by residues H124, 154–155 (RD), R187, R193, 262–265 (RPDR), and K343. Mn(2+) contacts are provided by D421, H425, D463, H464, and H481.

It belongs to the BPG-independent phosphoglycerate mutase family. Monomer. Mn(2+) is required as a cofactor.

It carries out the reaction (2R)-2-phosphoglycerate = (2R)-3-phosphoglycerate. Its pathway is carbohydrate degradation; glycolysis; pyruvate from D-glyceraldehyde 3-phosphate: step 3/5. Catalyzes the interconversion of 2-phosphoglycerate and 3-phosphoglycerate. This Mesoplasma florum (strain ATCC 33453 / NBRC 100688 / NCTC 11704 / L1) (Acholeplasma florum) protein is 2,3-bisphosphoglycerate-independent phosphoglycerate mutase.